Reading from the N-terminus, the 163-residue chain is Globin CTT-Z (163 aa).

Positions 1-16 (MKFFAVLALCIVGAIA) are cleaved as a signal peptide. Positions 18–162 (PLTSDEAALV…VYTAVFQIVT (145 aa)) constitute a Globin domain. Residues histidine 76 and histidine 111 each contribute to the heme b site.

It belongs to the globin family.

The chain is Globin CTT-Z (CTT-Z) from Chironomus thummi piger (Midge).